We begin with the raw amino-acid sequence, 115 residues long: Large ribosomal subunit protein bL19 (115 aa).

The protein belongs to the bacterial ribosomal protein bL19 family.

This protein is located at the 30S-50S ribosomal subunit interface and may play a role in the structure and function of the aminoacyl-tRNA binding site. This chain is Large ribosomal subunit protein bL19, found in Streptococcus equi subsp. zooepidemicus (strain H70).